A 485-amino-acid polypeptide reads, in one-letter code: Probable cobyric acid synthase (485 aa).

Residues 250–435 enclose the GATase cobBQ-type domain; it reads EIEVAVIRLP…LHGLFDNRNI (186 aa). Cysteine 328 serves as the catalytic Nucleophile. Residue histidine 427 is part of the active site.

It belongs to the CobB/CobQ family. CobQ subfamily.

Its pathway is cofactor biosynthesis; adenosylcobalamin biosynthesis. Its function is as follows. Catalyzes amidations at positions B, D, E, and G on adenosylcobyrinic A,C-diamide. NH(2) groups are provided by glutamine, and one molecule of ATP is hydrogenolyzed for each amidation. This chain is Probable cobyric acid synthase, found in Methanosarcina mazei (strain ATCC BAA-159 / DSM 3647 / Goe1 / Go1 / JCM 11833 / OCM 88) (Methanosarcina frisia).